The primary structure comprises 251 residues: Ubiquinone/menaquinone biosynthesis C-methyltransferase UbiE (251 aa).

S-adenosyl-L-methionine is bound by residues threonine 74, aspartate 95, 123 to 124 (NA), and serine 140.

This sequence belongs to the class I-like SAM-binding methyltransferase superfamily. MenG/UbiE family.

It catalyses the reaction a 2-demethylmenaquinol + S-adenosyl-L-methionine = a menaquinol + S-adenosyl-L-homocysteine + H(+). The enzyme catalyses a 2-methoxy-6-(all-trans-polyprenyl)benzene-1,4-diol + S-adenosyl-L-methionine = a 5-methoxy-2-methyl-3-(all-trans-polyprenyl)benzene-1,4-diol + S-adenosyl-L-homocysteine + H(+). Its pathway is quinol/quinone metabolism; menaquinone biosynthesis; menaquinol from 1,4-dihydroxy-2-naphthoate: step 2/2. The protein operates within cofactor biosynthesis; ubiquinone biosynthesis. Methyltransferase required for the conversion of demethylmenaquinol (DMKH2) to menaquinol (MKH2) and the conversion of 2-polyprenyl-6-methoxy-1,4-benzoquinol (DDMQH2) to 2-polyprenyl-3-methyl-6-methoxy-1,4-benzoquinol (DMQH2). In Salmonella arizonae (strain ATCC BAA-731 / CDC346-86 / RSK2980), this protein is Ubiquinone/menaquinone biosynthesis C-methyltransferase UbiE.